The sequence spans 431 residues: Cyclic 2,3-diphosphoglycerate synthetase (431 aa).

This sequence belongs to the cyclic 2,3-diphosphoglycerate synthetase family.

It localises to the cytoplasm. The enzyme catalyses (2R)-2,3-bisphosphoglycerate + ATP + H(+) = cyclic (2R)-2,3-bisphosphoglycerate + ADP + phosphate. Its function is as follows. Catalyzes the formation of cyclic 2,3-diphosphoglycerate (cDPG) by formation of an intramolecular phosphoanhydride bond at the expense of ATP. The chain is Cyclic 2,3-diphosphoglycerate synthetase from Pyrococcus furiosus (strain ATCC 43587 / DSM 3638 / JCM 8422 / Vc1).